An 81-amino-acid chain; its full sequence is uncharacterized protein (81 aa).

To M.thermoautotrophicum MTH886.

This is an uncharacterized protein from Methanocaldococcus jannaschii (strain ATCC 43067 / DSM 2661 / JAL-1 / JCM 10045 / NBRC 100440) (Methanococcus jannaschii).